The sequence spans 218 residues: Thiamine-phosphate synthase (218 aa).

4-amino-2-methyl-5-(diphosphooxymethyl)pyrimidine is bound by residues Gln43–Lys47 and Asn78. Asp79 and Asp98 together coordinate Mg(2+). Ser117 is a binding site for 4-amino-2-methyl-5-(diphosphooxymethyl)pyrimidine. Position 143–145 (Thr143–Ser145) interacts with 2-[(2R,5Z)-2-carboxy-4-methylthiazol-5(2H)-ylidene]ethyl phosphate. Lys146 serves as a coordination point for 4-amino-2-methyl-5-(diphosphooxymethyl)pyrimidine. 2-[(2R,5Z)-2-carboxy-4-methylthiazol-5(2H)-ylidene]ethyl phosphate-binding positions include Gly174 and Ile194–Ser195.

This sequence belongs to the thiamine-phosphate synthase family. Requires Mg(2+) as cofactor.

It carries out the reaction 2-[(2R,5Z)-2-carboxy-4-methylthiazol-5(2H)-ylidene]ethyl phosphate + 4-amino-2-methyl-5-(diphosphooxymethyl)pyrimidine + 2 H(+) = thiamine phosphate + CO2 + diphosphate. The catalysed reaction is 2-(2-carboxy-4-methylthiazol-5-yl)ethyl phosphate + 4-amino-2-methyl-5-(diphosphooxymethyl)pyrimidine + 2 H(+) = thiamine phosphate + CO2 + diphosphate. It catalyses the reaction 4-methyl-5-(2-phosphooxyethyl)-thiazole + 4-amino-2-methyl-5-(diphosphooxymethyl)pyrimidine + H(+) = thiamine phosphate + diphosphate. Its pathway is cofactor biosynthesis; thiamine diphosphate biosynthesis; thiamine phosphate from 4-amino-2-methyl-5-diphosphomethylpyrimidine and 4-methyl-5-(2-phosphoethyl)-thiazole: step 1/1. In terms of biological role, condenses 4-methyl-5-(beta-hydroxyethyl)thiazole monophosphate (THZ-P) and 2-methyl-4-amino-5-hydroxymethyl pyrimidine pyrophosphate (HMP-PP) to form thiamine monophosphate (TMP). The chain is Thiamine-phosphate synthase from Lactococcus lactis subsp. cremoris (strain SK11).